We begin with the raw amino-acid sequence, 229 residues long: Flagellar L-ring protein (229 aa).

The first 23 residues, 1–23, serve as a signal peptide directing secretion; it reads MNPLTRVALAVAAFAALVLALSA. The N-palmitoyl cysteine moiety is linked to residue Cys24. Residue Cys24 is the site of S-diacylglycerol cysteine attachment.

The protein belongs to the FlgH family. As to quaternary structure, the basal body constitutes a major portion of the flagellar organelle and consists of four rings (L,P,S, and M) mounted on a central rod.

Its subcellular location is the cell outer membrane. It localises to the bacterial flagellum basal body. Functionally, assembles around the rod to form the L-ring and probably protects the motor/basal body from shearing forces during rotation. In Anaeromyxobacter dehalogenans (strain 2CP-1 / ATCC BAA-258), this protein is Flagellar L-ring protein.